The following is a 550-amino-acid chain: CTP synthase (550 aa).

The segment at 1-277 (MNGSADAGPR…GRAVERALGL (277 aa)) is amidoligase domain. S23 is a binding site for CTP. S23 is a UTP binding site. 24–29 (SLGKGI) provides a ligand contact to ATP. An L-glutamine-binding site is contributed by Y64. D81 lines the ATP pocket. D81 and E151 together coordinate Mg(2+). CTP is bound by residues 158 to 160 (DIE), 198 to 203 (KTKPTQ), and K234. UTP is bound by residues 198–203 (KTKPTQ) and K234. An ATP-binding site is contributed by V252. Positions 302 to 549 (KIAIAGKYVK…VEAALAYQER (248 aa)) constitute a Glutamine amidotransferase type-1 domain. G364 contributes to the L-glutamine binding site. Residue C391 is the Nucleophile; for glutamine hydrolysis of the active site. Residues 392-395 (LGLQ), E415, and R472 each bind L-glutamine. Catalysis depends on residues H522 and E524.

Belongs to the CTP synthase family. As to quaternary structure, homotetramer in the presence of UTP and ATP. Is in a protein concentration-dependent equilibrium between monomer, dimer, and tetramer in the absence of UTP and ATP.

It carries out the reaction UTP + L-glutamine + ATP + H2O = CTP + L-glutamate + ADP + phosphate + 2 H(+). The enzyme catalyses L-glutamine + H2O = L-glutamate + NH4(+). The catalysed reaction is UTP + NH4(+) + ATP = CTP + ADP + phosphate + 2 H(+). It functions in the pathway pyrimidine metabolism; CTP biosynthesis via de novo pathway; CTP from UDP: step 2/2. Its activity is regulated as follows. Allosterically activated by GTP, when glutamine is the substrate. GTP has no effect on the reaction when ammonia is the substrate. The allosteric effector GTP functions by stabilizing the protein conformation that binds the tetrahedral intermediate(s) formed during glutamine hydrolysis. Inhibited by the product CTP, via allosteric rather than competitive inhibition. In terms of biological role, catalyzes the ATP-dependent amination of UTP to CTP with either L-glutamine or ammonia as the source of nitrogen. Regulates intracellular CTP levels through interactions with the four ribonucleotide triphosphates. The sequence is that of CTP synthase from Thermus thermophilus (strain ATCC 27634 / DSM 579 / HB8).